Consider the following 108-residue polypeptide: Protein YcgL (108 aa).

The 85-residue stretch at 12 to 96 folds into the YcgL domain; it reads MFCVIYRSSK…PPEDLLKQHL (85 aa).

This Escherichia coli O17:K52:H18 (strain UMN026 / ExPEC) protein is Protein YcgL.